We begin with the raw amino-acid sequence, 217 residues long: Probable transaldolase (217 aa).

The active-site Schiff-base intermediate with substrate is Lys83.

It belongs to the transaldolase family. Type 3B subfamily.

The protein localises to the cytoplasm. It catalyses the reaction D-sedoheptulose 7-phosphate + D-glyceraldehyde 3-phosphate = D-erythrose 4-phosphate + beta-D-fructose 6-phosphate. It participates in carbohydrate degradation; pentose phosphate pathway; D-glyceraldehyde 3-phosphate and beta-D-fructose 6-phosphate from D-ribose 5-phosphate and D-xylulose 5-phosphate (non-oxidative stage): step 2/3. Its function is as follows. Transaldolase is important for the balance of metabolites in the pentose-phosphate pathway. The polypeptide is Probable transaldolase (Ruegeria pomeroyi (strain ATCC 700808 / DSM 15171 / DSS-3) (Silicibacter pomeroyi)).